We begin with the raw amino-acid sequence, 653 residues long: MLLRYRIPEILRIRSPLKKWYSTVKPMSAAEEMRLKISQEQTRKAIQERIDKIPIENYRNFSIVAHVDHGKSTLSDRLLELTGVIQPGMKAQVLDKLEVERERGITVKAQTVSMFYNDGNQDYLLHLVDTPGHVDFRAEVSRSYASCGGALLLVDASQGVQAQTVANFYLAYSMGLKLIPIINKIDLDSANIPGAMEQVETTFELDSNDCIAVSAKTGLNVEQIIPSIIKNIPAPNCDETKPLRALLVDSWHDPYVGVVMLLHIVDGKLKKGMKIVSAHSNKAYDVKEVGIMYPDRTPMDHIKAGQVAYIIPGMKNPREALVGDTFYQLGKSEGLEPLPGFEEPKPMVFVGAFPADGREFNAMDDQMQNLVLNDRAVTLEQETSNALGLGWRLGFLGSLHASVFKERLEKEYGAQIILTAPTVPYKIFYKNGTEKVITNPDEFPDNTRHHDVEKYLEPYVEAIMTVPEEYMGNVMTLCLNNRGEQKDIEYLTTGQVLLKYEIPLSQLVEDFFGKLKGCTKGYASLDYEEAGYKKSDIVKLELCVNGEPQDALTTIIHKSQAQARGKEYVSKFKKYLKNQLFEVAIQAKVNNKVVARETIKARRKDVTQRLHAADISRYKKLLERQKEGKKQMKATGKVHIKNDAYQAFLRRDD.

The tr-type G domain occupies 56 to 236 (ENYRNFSIVA…SIIKNIPAPN (181 aa)). GTP contacts are provided by residues 65 to 72 (AHVDHGKS), 129 to 133 (DTPGH), and 183 to 186 (NKID).

Belongs to the TRAFAC class translation factor GTPase superfamily. Classic translation factor GTPase family. LepA subfamily.

It localises to the mitochondrion inner membrane. The enzyme catalyses GTP + H2O = GDP + phosphate + H(+). In terms of biological role, promotes mitochondrial protein synthesis. May act as a fidelity factor of the translation reaction, by catalyzing a one-codon backward translocation of tRNAs on improperly translocated ribosomes. Binds to mitochondrial ribosomes in a GTP-dependent manner. This is Translation factor GUF1, mitochondrial from Candida tropicalis (strain ATCC MYA-3404 / T1) (Yeast).